Reading from the N-terminus, the 546-residue chain is (-)-5-epieremophilene synthase STPS1 (546 aa).

Residues Asp299, Asp303, Asp442, Thr446, and Glu450 each coordinate Mg(2+). The DDXXD motif motif lies at 299–303; it reads DDTYD.

It belongs to the terpene synthase family. Tpsa subfamily. Monomer. Requires Mg(2+) as cofactor. Highly expressed in leaves and at lower levels in flowers.

The enzyme catalyses (2E,6E)-farnesyl diphosphate = (-)-5-epi-eremophilene + diphosphate. The protein operates within secondary metabolite biosynthesis; terpenoid biosynthesis. Functionally, sesquiterpene synthase that catalyzes the conversion of farnesyl diphosphate to (-)-5-epi-eremophilene. The chain is (-)-5-epieremophilene synthase STPS1 from Salvia miltiorrhiza (Chinese sage).